A 210-amino-acid chain; its full sequence is MAKKGLLGRKIGMTQVFADNGVAVPVTVVQAGPCVVVQKKTVEKDGYEAVQIGFGDVREKLLNKPKRGHLKNAGVRLVRVLREIKVDSMDEYKVGQELKADVFSAGEYVDVVGTSKGKGFAGGIKRHNFKRGPMKHGSKYHRRPGSAGAKGPARIFKGRKMPGRMGNERVTVQKLQVVRVDAERNLLLIKGAVPGPKRGLLLIKSSIKAK.

Residues 132–144 show a composition bias toward basic residues; the sequence is GPMKHGSKYHRRP. A disordered region spans residues 132-152; sequence GPMKHGSKYHRRPGSAGAKGP.

It belongs to the universal ribosomal protein uL3 family. As to quaternary structure, part of the 50S ribosomal subunit. Forms a cluster with proteins L14 and L19.

Functionally, one of the primary rRNA binding proteins, it binds directly near the 3'-end of the 23S rRNA, where it nucleates assembly of the 50S subunit. The sequence is that of Large ribosomal subunit protein uL3 from Heliobacterium modesticaldum (strain ATCC 51547 / Ice1).